Consider the following 51-residue polypeptide: Large ribosomal subunit protein eL39 (51 aa).

Basic residues predominate over residues M1–K15. The interval M1 to R21 is disordered.

Belongs to the eukaryotic ribosomal protein eL39 family. In terms of assembly, interacts with YIH1.

The chain is Large ribosomal subunit protein eL39 (RPL39) from Eremothecium gossypii (strain ATCC 10895 / CBS 109.51 / FGSC 9923 / NRRL Y-1056) (Yeast).